The primary structure comprises 479 residues: Ribosomal RNA small subunit methyltransferase F (479 aa).

S-adenosyl-L-methionine contacts are provided by residues 125 to 131 (AAAPGSK), Glu-149, Asp-176, and Asp-194. Cys-247 functions as the Nucleophile in the catalytic mechanism.

This sequence belongs to the class I-like SAM-binding methyltransferase superfamily. RsmB/NOP family.

It is found in the cytoplasm. The enzyme catalyses cytidine(1407) in 16S rRNA + S-adenosyl-L-methionine = 5-methylcytidine(1407) in 16S rRNA + S-adenosyl-L-homocysteine + H(+). Its function is as follows. Specifically methylates the cytosine at position 1407 (m5C1407) of 16S rRNA. In Escherichia coli (strain SE11), this protein is Ribosomal RNA small subunit methyltransferase F.